We begin with the raw amino-acid sequence, 345 residues long: Flotillin-like protein FloA 1 (345 aa).

A helical membrane pass occupies residues 26–46 (LLLLVGVFLALFFAAVLGFFF).

This sequence belongs to the flotillin-like FloA family. In terms of assembly, homooligomerizes.

Its subcellular location is the cell membrane. The protein localises to the membrane raft. Found in functional membrane microdomains (FMM) that may be equivalent to eukaryotic membrane rafts. FMMs are highly dynamic and increase in number as cells age. Flotillins are thought to be important factors in membrane fluidity. The chain is Flotillin-like protein FloA 1 from Rhodopirellula baltica (strain DSM 10527 / NCIMB 13988 / SH1).